A 216-amino-acid chain; its full sequence is MRIFLDTANIEEIKKGLKLGVVSGVTTNPTLVAKEGISDYKSVVQQICALLPEGDVSAEITAEDPAEMLKQAREIAKWAPNVVVKIPATAEGLEIISKLSKEGVRFNMTLCFSVNQALLGALAGAAFVSPFVGRLDDAGHDGMMLINDIVSIYKEYGFETQVIAASIRHPLHCTQAAQTGAGIATVPYKVLMQMMQHPLTDSGIARFMADWKSVQK.

Residue Lys85 is the Schiff-base intermediate with substrate of the active site.

Belongs to the transaldolase family. Type 3B subfamily.

The protein resides in the cytoplasm. It carries out the reaction D-sedoheptulose 7-phosphate + D-glyceraldehyde 3-phosphate = D-erythrose 4-phosphate + beta-D-fructose 6-phosphate. It participates in carbohydrate degradation; pentose phosphate pathway; D-glyceraldehyde 3-phosphate and beta-D-fructose 6-phosphate from D-ribose 5-phosphate and D-xylulose 5-phosphate (non-oxidative stage): step 2/3. Functionally, transaldolase is important for the balance of metabolites in the pentose-phosphate pathway. The polypeptide is Probable transaldolase (Dehalococcoides mccartyi (strain ATCC BAA-2266 / KCTC 15142 / 195) (Dehalococcoides ethenogenes (strain 195))).